A 418-amino-acid chain; its full sequence is Hydroxysqualene dehydroxylase (418 aa).

Belongs to the HpnE family.

It carries out the reaction squalene + FAD + H2O + H(+) = hydroxysqualene + FADH2. The protein operates within secondary metabolite biosynthesis; hopanoid biosynthesis. Its function is as follows. Involved in the biosynthesis of the hopanoid precursor squalene (SQ) from farnesyl diphosphate (FPP). Catalyzes the third (last) step, the reduction of hydroxysqualene (HSQ) to SQ. The chain is Hydroxysqualene dehydroxylase from Rhodopseudomonas palustris (strain ATCC BAA-98 / CGA009).